The primary structure comprises 130 residues: Fluoride-specific ion channel FluC (130 aa).

Transmembrane regions (helical) follow at residues 3–23 (LVFLWAALGGAIGSSLRYFVG), 38–58 (LGTFSVNLIGCFIIGFMGHLA), 67–87 (FGIFFVTGVLGGFTTFSSYGL), and 102–122 (ISYVLGTNLLGLIGVAIGWFL). Na(+) is bound by residues Gly77 and Thr80.

It belongs to the fluoride channel Fluc/FEX (TC 1.A.43) family.

It is found in the cell inner membrane. The catalysed reaction is fluoride(in) = fluoride(out). Na(+) is not transported, but it plays an essential structural role and its presence is essential for fluoride channel function. In terms of biological role, fluoride-specific ion channel. Important for reducing fluoride concentration in the cell, thus reducing its toxicity. The chain is Fluoride-specific ion channel FluC from Helicobacter pylori (strain J99 / ATCC 700824) (Campylobacter pylori J99).